The chain runs to 122 residues: Large ribosomal subunit protein uL18 (122 aa).

The protein belongs to the universal ribosomal protein uL18 family. Part of the 50S ribosomal subunit; part of the 5S rRNA/L5/L18/L25 subcomplex. Contacts the 5S and 23S rRNAs.

Functionally, this is one of the proteins that bind and probably mediate the attachment of the 5S RNA into the large ribosomal subunit, where it forms part of the central protuberance. This is Large ribosomal subunit protein uL18 from Prochlorococcus marinus (strain MIT 9215).